Here is a 285-residue protein sequence, read N- to C-terminus: Transcription factor LBX1 (285 aa).

The span at 1-20 (MTSKEDGKAAPGEERRRSPL) shows a compositional bias: basic and acidic residues. Residues 1–36 (MTSKEDGKAAPGEERRRSPLDHLPPPANSNKPLTPF) are disordered. The homeobox DNA-binding region spans 125–184 (RRKSRTAFTNHQIYELEKRFLYQKYLSPADRDQIAQQLGLTNAQVITWFQNRRAKLKRDL). The segment at 212 to 285 (EQNSEASGGG…EEDEEIDVDD (74 aa)) is disordered. Positions 218–230 (SGGGGGGGGGGCG) are enriched in gly residues. Positions 272 to 285 (CSEDEEDEEIDVDD) are enriched in acidic residues.

Interacts with SKOR1 which acts as a transcriptional corepressor.

The protein resides in the nucleus. In terms of biological role, transcription factor required for the development of GABAergic interneurons in the dorsal horn of the spinal cord and migration and further development of hypaxial muscle precursor cells for limb muscles, diaphragm and hypoglossal cord. This Rattus norvegicus (Rat) protein is Transcription factor LBX1.